The primary structure comprises 263 residues: MKPTTIALLQKYKQEKKRFATITAYDYSFAKLFADEGLSVMLVGDSLGMTIQGHDSTLPVTVEDIAYHTRAVRRGAPNCLLLSDLPFMAYATPEQAFANAATMMRAGANMVKIEGGAWLVDTVKMLTERAVPVCAHLGLTPQSVNIFGGYKVQGRGDAGDQLLSDALALEGAGAQLLVLECVPVELAKRVTEALSIPVIGIGAGNVTDGQILVMHDAFGITGGHIPKFAKNFLSTAGDIRAAVRQYISEVASGVYPGEEHSFH.

Residues aspartate 45 and aspartate 84 each contribute to the Mg(2+) site. 3-methyl-2-oxobutanoate contacts are provided by residues 45–46, aspartate 84, and lysine 112; that span reads DS. Position 114 (glutamate 114) interacts with Mg(2+). Residue glutamate 180 is the Proton acceptor of the active site.

Belongs to the PanB family. As to quaternary structure, homodecamer; pentamer of dimers. Requires Mg(2+) as cofactor.

The protein resides in the cytoplasm. It carries out the reaction 3-methyl-2-oxobutanoate + (6R)-5,10-methylene-5,6,7,8-tetrahydrofolate + H2O = 2-dehydropantoate + (6S)-5,6,7,8-tetrahydrofolate. Its pathway is cofactor biosynthesis; (R)-pantothenate biosynthesis; (R)-pantoate from 3-methyl-2-oxobutanoate: step 1/2. Its function is as follows. Catalyzes the reversible reaction in which hydroxymethyl group from 5,10-methylenetetrahydrofolate is transferred onto alpha-ketoisovalerate to form ketopantoate. This chain is 3-methyl-2-oxobutanoate hydroxymethyltransferase, found in Salmonella arizonae (strain ATCC BAA-731 / CDC346-86 / RSK2980).